The primary structure comprises 926 residues: MALKSPAFRKKFPLLVTGSLLAMQPLATQFVVAAEQYDCSVSASGAWNCAPKSNAAAVDLPPRPVHDTTSVSSNGTVTSQGTSSGEQSAGTQLVTEAKGKGLKSRSADYSHLDWVPREKLTAAQLAETGPYCSGAYVEPIRPGMDDKTPMKDAPMFVGAKASRYEQDAQVATLAGDVVMRQGSMQVQAQEAALHQAENRGELNGDVRLRDNGALIVGDKAELQLDTGEARVDNAEYVLHKSNIRGNALYAKRAENAIIRLKDGTYTTCEPNSNAWTLKGNNITLNPATGFGTATNVTLRVKDIPVLYTPYIYFPIDDRRQSGFLPPTIAAGGDNGFTLVTPYYFNLAPNYDATLYPRYMADRGLLMEGEFRYLTKGSEGQFGGAYLNDENDDRKQQSDYDKTRWMINWQHKGGLDTRWLTQVDYTDISDPYYFQDLETDQIGVKRTDFLNQQGSLTYRGDSFSAVLNAQAYKLATVANVTPYNRLPQLTLNGTLPYNPGGLKFDYQTEAVRFERDLRSGAFIDEDGNSETRLDNNISGLARANGDRLNLAPSVSLPMNWTYGFLTPKLKYVYTQYDLDLDSQGKNTLLAGEEYSSSQSRSVPIFSVDSGLYFDRNTNWFGKDYRQTLEPRLFYLYVPEKDQTDIPVFDTSESTFNYASLFRDNRFTGSDRIGDENKLSLGVTNRWIEDNGFERQRFSIGQALYFEDRKVQLPGVVFADRDDARSNVSPYALEYEYRFNRDWRFNSDFNWDPDSRSTRSGSAMFHYQPEDNPNKVVNLGYRYRNDQIRYDESTGRWVVGGGDYGTPGSPNYVKDYYKIQQHDFSVIWPIVPQWSLISRWQYDYNRERTIEAFGGFEYDNCCWKMRLVNRYWIDYDEFSQAAPQNEKGDRGIFLQIVLKGLGGVTGAKVDSFLDKGIQGYREREDQAF.

The first 22 residues, 1 to 22, serve as a signal peptide directing secretion; that stretch reads MALKSPAFRKKFPLLVTGSLLA. The segment at 55–91 is disordered; that stretch reads AAAVDLPPRPVHDTTSVSSNGTVTSQGTSSGEQSAGT. Positions 68–91 are enriched in low complexity; sequence TTSVSSNGTVTSQGTSSGEQSAGT.

This sequence belongs to the LptD family. As to quaternary structure, component of the lipopolysaccharide transport and assembly complex. Interacts with LptE and LptA.

It localises to the cell outer membrane. Functionally, together with LptE, is involved in the assembly of lipopolysaccharide (LPS) at the surface of the outer membrane. The chain is LPS-assembly protein LptD from Pseudomonas syringae pv. syringae (strain B728a).